The primary structure comprises 172 residues: Peptide methionine sulfoxide reductase MsrA 1 (172 aa).

The active site involves Cys-14.

Belongs to the MsrA Met sulfoxide reductase family.

It catalyses the reaction L-methionyl-[protein] + [thioredoxin]-disulfide + H2O = L-methionyl-(S)-S-oxide-[protein] + [thioredoxin]-dithiol. The catalysed reaction is [thioredoxin]-disulfide + L-methionine + H2O = L-methionine (S)-S-oxide + [thioredoxin]-dithiol. Has an important function as a repair enzyme for proteins that have been inactivated by oxidation. Catalyzes the reversible oxidation-reduction of methionine sulfoxide in proteins to methionine. The polypeptide is Peptide methionine sulfoxide reductase MsrA 1 (msrA1) (Mesorhizobium japonicum (strain LMG 29417 / CECT 9101 / MAFF 303099) (Mesorhizobium loti (strain MAFF 303099))).